A 208-amino-acid chain; its full sequence is Large ribosomal subunit protein bL25 (208 aa).

It belongs to the bacterial ribosomal protein bL25 family. CTC subfamily. In terms of assembly, part of the 50S ribosomal subunit; part of the 5S rRNA/L5/L18/L25 subcomplex. Contacts the 5S rRNA. Binds to the 5S rRNA independently of L5 and L18.

Its function is as follows. This is one of the proteins that binds to the 5S RNA in the ribosome where it forms part of the central protuberance. The polypeptide is Large ribosomal subunit protein bL25 (Burkholderia pseudomallei (strain K96243)).